A 364-amino-acid chain; its full sequence is Glutamine synthetase (364 aa).

The GS beta-grasp domain occupies 15–94 (VLAEYIWIDA…VLAECWNNDG (80 aa)). In terms of domain architecture, GS catalytic spans 101–364 (HRHECAKLMS…ETKRGEEEGF (264 aa)).

This sequence belongs to the glutamine synthetase family. As to quaternary structure, homooctamer.

It is found in the cytoplasm. The catalysed reaction is L-glutamate + NH4(+) + ATP = L-glutamine + ADP + phosphate + H(+). The chain is Glutamine synthetase (GLN1) from Yarrowia lipolytica (strain CLIB 122 / E 150) (Yeast).